The sequence spans 426 residues: Proline--tRNA ligase (426 aa).

Belongs to the class-II aminoacyl-tRNA synthetase family. ProS type 2 subfamily. Homodimer.

It is found in the cytoplasm. It carries out the reaction tRNA(Pro) + L-proline + ATP = L-prolyl-tRNA(Pro) + AMP + diphosphate. Catalyzes the attachment of proline to tRNA(Pro) in a two-step reaction: proline is first activated by ATP to form Pro-AMP and then transferred to the acceptor end of tRNA(Pro). The protein is Proline--tRNA ligase of Rickettsia africae (strain ESF-5).